The sequence spans 149 residues: Oligosaccharyltransferase complex subunit OSTC (149 aa).

Residues 1 to 32 (MESLYRVPFLVLECPNLKLKKPPWVHMPSAMT) are Cytoplasmic-facing. Residues 33-53 (VYALVVVSYFLITGGIIYDVI) form a helical membrane-spanning segment. The Extracellular segment spans residues 54–83 (VEPPSVGSVTDEHGHQRPVAFLAYRVNGQY). Residues 84–104 (IMEGLASSFLFTMGGLGFIIL) traverse the membrane as a helical segment. Residues 105–117 (DRSNAPNIPKLNR) are Cytoplasmic-facing. The helical transmembrane segment at 118–138 (FLLLFIGFVCVLLSFFMARVF) threads the bilayer. At 139-149 (MRMKLPGYLMG) the chain is on the extracellular side.

Belongs to the OSTC family. Component of STT3A-containing oligosaccharyl transferase (OST-A) complex. STT3A-containing complex assembly occurs through the formation of 3 subcomplexes. Subcomplex 1 contains RPN1 and TMEM258, subcomplex 2 contains the STT3A-specific subunits STT3A, DC2/OSTC, and KCP2 as well as the core subunit OST4, and subcomplex 3 contains RPN2, DAD1, and OST48. The OST-A complex can form stable complexes with the Sec61 complex or with both the Sec61 and TRAP complexes. Interacts with PSEN1 and NCSTN; indicative for an association with the gamma-secretase complex.

It is found in the endoplasmic reticulum. The protein localises to the membrane. It functions in the pathway protein modification; protein glycosylation. Functionally, subunit of STT3A-containing oligosaccharyl transferase (OST-A) complex that catalyzes the initial transfer of a defined glycan (Glc(3)Man(9)GlcNAc(2) in eukaryotes) from the lipid carrier dolichol-pyrophosphate to an asparagine residue within an Asn-X-Ser/Thr consensus motif in nascent polypeptide chains, the first step in protein N-glycosylation. N-glycosylation occurs cotranslationally and the complex associates with the Sec61 complex at the channel-forming translocon complex that mediates protein translocation across the endoplasmic reticulum (ER). Within the OST-A complex, acts as an adapter that anchors the OST-A complex to the Sec61 complex. May be involved in N-glycosylation of APP (amyloid-beta precursor protein). Can modulate gamma-secretase cleavage of APP by enhancing endoprotelysis of PSEN1. The sequence is that of Oligosaccharyltransferase complex subunit OSTC from Bos taurus (Bovine).